Here is a 157-residue protein sequence, read N- to C-terminus: Trafficking protein particle complex subunit 6b (157 aa).

The protein belongs to the TRAPP small subunits family. BET3 subfamily. As to quaternary structure, homodimer. Part of a TRAPP complex.

The protein localises to the golgi apparatus. It localises to the cis-Golgi network. The protein resides in the endoplasmic reticulum. Its function is as follows. Component of a transport protein particle (TRAPP) complex that may function in specific stages of inter-organelle traffic. Specifically involved in the early development of neural circuitry, likely by controlling the frequency and amplitude of intracellular calcium transients implicated in the regulation of neuron differentiation and survival. The polypeptide is Trafficking protein particle complex subunit 6b (Danio rerio (Zebrafish)).